We begin with the raw amino-acid sequence, 345 residues long: uncharacterized protein (345 aa).

The protein belongs to the methyltransferase superfamily.

This is an uncharacterized protein from Streptomyces fradiae (Streptomyces roseoflavus).